A 251-amino-acid polypeptide reads, in one-letter code: MPSVTMRDMLKAGVHFGHQTRFWNPKMKPYIFGARNKIHIVNLEKTLPLFNDALGFVNKLASSNNTILFVGTKRAAQKAVAEEATRCGMPYVDHRWLGGMLTNWKTIRQSIKRFRDLEAQANDGTFDKLTKKEALMRRREMEKLERSIGGIKDMGGLPDALFVIDVDHEDIAVQEARKLGIPVIAVVDTNSNPDGVDYFIPGNDDAIRAIQLYVGAVADAIIEGRQYAATQAPGGDSDGFVEVEEAGEAQA.

This sequence belongs to the universal ribosomal protein uS2 family.

The polypeptide is Small ribosomal subunit protein uS2 (rpsB) (Arthrospira platensis (Spirulina platensis)).